The chain runs to 459 residues: Bifunctional protein GlmU (459 aa).

The interval 1 to 229 (MSNFAIILAA…FDESLGVNDR (229 aa)) is pyrophosphorylase. UDP-N-acetyl-alpha-D-glucosamine is bound by residues 8–11 (LAAG), Lys-22, Gln-72, 77–78 (GT), 101–102 (GD), Gly-139, Glu-154, Asn-169, and Asn-227. Ca(2+) is bound at residue Asp-102. Asp-102 serves as a coordination point for Mg(2+). Asn-227 is a binding site for Ca(2+). Residue Asn-227 participates in Mg(2+) binding. The segment at 230–250 (VALATAESVMRRRINHKHMVN) is linker. The tract at residues 251–459 (GVSFVNPEAT…TRLPHHPKNQ (209 aa)) is N-acetyltransferase. Arg-332 and Lys-350 together coordinate UDP-N-acetyl-alpha-D-glucosamine. His-362 acts as the Proton acceptor in catalysis. UDP-N-acetyl-alpha-D-glucosamine contacts are provided by Tyr-365 and Asn-376. Acetyl-CoA contacts are provided by residues Ala-379, 385–386 (NY), Ser-404, Ala-422, and Arg-439.

In the N-terminal section; belongs to the N-acetylglucosamine-1-phosphate uridyltransferase family. The protein in the C-terminal section; belongs to the transferase hexapeptide repeat family. As to quaternary structure, homotrimer. Requires Mg(2+) as cofactor. The cofactor is Ca(2+).

Its subcellular location is the cytoplasm. The catalysed reaction is alpha-D-glucosamine 1-phosphate + acetyl-CoA = N-acetyl-alpha-D-glucosamine 1-phosphate + CoA + H(+). It carries out the reaction N-acetyl-alpha-D-glucosamine 1-phosphate + UTP + H(+) = UDP-N-acetyl-alpha-D-glucosamine + diphosphate. Its pathway is nucleotide-sugar biosynthesis; UDP-N-acetyl-alpha-D-glucosamine biosynthesis; N-acetyl-alpha-D-glucosamine 1-phosphate from alpha-D-glucosamine 6-phosphate (route II): step 2/2. It functions in the pathway nucleotide-sugar biosynthesis; UDP-N-acetyl-alpha-D-glucosamine biosynthesis; UDP-N-acetyl-alpha-D-glucosamine from N-acetyl-alpha-D-glucosamine 1-phosphate: step 1/1. It participates in bacterial outer membrane biogenesis; LPS lipid A biosynthesis. In terms of biological role, catalyzes the last two sequential reactions in the de novo biosynthetic pathway for UDP-N-acetylglucosamine (UDP-GlcNAc). The C-terminal domain catalyzes the transfer of acetyl group from acetyl coenzyme A to glucosamine-1-phosphate (GlcN-1-P) to produce N-acetylglucosamine-1-phosphate (GlcNAc-1-P), which is converted into UDP-GlcNAc by the transfer of uridine 5-monophosphate (from uridine 5-triphosphate), a reaction catalyzed by the N-terminal domain. In Streptococcus pneumoniae serotype 4 (strain ATCC BAA-334 / TIGR4), this protein is Bifunctional protein GlmU.